A 100-amino-acid chain; its full sequence is Urease subunit gamma (100 aa).

Belongs to the urease gamma subunit family. Heterotrimer of UreA (gamma), UreB (beta) and UreC (alpha) subunits. Three heterotrimers associate to form the active enzyme.

The protein localises to the cytoplasm. It catalyses the reaction urea + 2 H2O + H(+) = hydrogencarbonate + 2 NH4(+). Its pathway is nitrogen metabolism; urea degradation; CO(2) and NH(3) from urea (urease route): step 1/1. This is Urease subunit gamma from Synechocystis sp. (strain ATCC 27184 / PCC 6803 / Kazusa).